Consider the following 318-residue polypeptide: NADH-ubiquinone oxidoreductase chain 1 (318 aa).

8 helical membrane-spanning segments follow: residues T3–V23, I69–L89, F98–W118, A135–L155, H171–A191, A217–L237, E253–I273, and L294–I314.

Belongs to the complex I subunit 1 family. Core subunit of respiratory chain NADH dehydrogenase (Complex I) which is composed of 45 different subunits.

Its subcellular location is the mitochondrion inner membrane. The catalysed reaction is a ubiquinone + NADH + 5 H(+)(in) = a ubiquinol + NAD(+) + 4 H(+)(out). Its function is as follows. Core subunit of the mitochondrial membrane respiratory chain NADH dehydrogenase (Complex I) which catalyzes electron transfer from NADH through the respiratory chain, using ubiquinone as an electron acceptor. Essential for the catalytic activity and assembly of complex I. This chain is NADH-ubiquinone oxidoreductase chain 1 (MT-ND1), found in Papio hamadryas (Hamadryas baboon).